Here is a 298-residue protein sequence, read N- to C-terminus: Probable alpha-L-glutamate ligase (298 aa).

In terms of domain architecture, ATP-grasp spans 108-290; sequence LQLLLKTGVP…IAAEIIDYIE (183 aa). ATP contacts are provided by residues Lys-144, 181–182, Asp-190, and 214–216; these read DF and RAN. Mg(2+) is bound by residues Asp-251, Glu-263, and Asn-265. Residues Asp-251, Glu-263, and Asn-265 each contribute to the Mn(2+) site.

It belongs to the RimK family. Requires Mg(2+) as cofactor. It depends on Mn(2+) as a cofactor.

This chain is Probable alpha-L-glutamate ligase, found in Haemophilus influenzae (strain PittEE).